The sequence spans 452 residues: Phenylalanine-4-hydroxylase (452 aa).

Serine 16 carries the post-translational modification Phosphoserine; by PKA. In terms of domain architecture, ACT spans 36 to 114 (SLIFSLKEEV…TVHELSRDKK (79 aa)). Fe cation-binding residues include histidine 285, histidine 290, and glutamate 330.

This sequence belongs to the biopterin-dependent aromatic amino acid hydroxylase family. As to quaternary structure, homodimer and homotetramer. The cofactor is Fe(2+). Post-translationally, phosphorylation at Ser-16 increases basal activity and facilitates activation by the substrate phenylalanine.

It catalyses the reaction (6R)-L-erythro-5,6,7,8-tetrahydrobiopterin + L-phenylalanine + O2 = (4aS,6R)-4a-hydroxy-L-erythro-5,6,7,8-tetrahydrobiopterin + L-tyrosine. Its pathway is amino-acid degradation; L-phenylalanine degradation; acetoacetate and fumarate from L-phenylalanine: step 1/6. N-terminal region of PAH is thought to contain allosteric binding sites for phenylalanine and to constitute an 'inhibitory' domain that regulates the activity of a catalytic domain in the C-terminal portion of the molecule. In terms of biological role, catalyzes the hydroxylation of L-phenylalanine to L-tyrosine. The protein is Phenylalanine-4-hydroxylase (PAH) of Homo sapiens (Human).